The chain runs to 330 residues: Glycerol-3-phosphate dehydrogenase [NAD(P)+] (330 aa).

The NADPH site is built by tryptophan 11, arginine 33, and lysine 105. Lysine 105, glycine 133, and serine 135 together coordinate sn-glycerol 3-phosphate. Alanine 137 contacts NADPH. Sn-glycerol 3-phosphate contacts are provided by lysine 188, aspartate 241, serine 251, arginine 252, and asparagine 253. Catalysis depends on lysine 188, which acts as the Proton acceptor. Arginine 252 serves as a coordination point for NADPH. Residues valine 276 and glutamate 278 each contribute to the NADPH site.

Belongs to the NAD-dependent glycerol-3-phosphate dehydrogenase family.

The protein localises to the cytoplasm. The catalysed reaction is sn-glycerol 3-phosphate + NAD(+) = dihydroxyacetone phosphate + NADH + H(+). The enzyme catalyses sn-glycerol 3-phosphate + NADP(+) = dihydroxyacetone phosphate + NADPH + H(+). Its pathway is membrane lipid metabolism; glycerophospholipid metabolism. Catalyzes the reduction of the glycolytic intermediate dihydroxyacetone phosphate (DHAP) to sn-glycerol 3-phosphate (G3P), the key precursor for phospholipid synthesis. The protein is Glycerol-3-phosphate dehydrogenase [NAD(P)+] of Acidovorax ebreus (strain TPSY) (Diaphorobacter sp. (strain TPSY)).